A 374-amino-acid chain; its full sequence is Mitochondrial import inner membrane translocase subunit tim50 (374 aa).

The N-terminal 48 residues, 1–48, are a transit peptide targeting the mitochondrion; the sequence is MILNKVAKCYGKQIGFFGNKTTQFIKPNQTIFLIGGTKRLFTTQQQQS. The interval 42 to 97 is disordered; sequence TTQQQQSPKKEEPKSEQQKKVEDKTEEKEKEKDEEENENEKEKENEDGEGQKKKSK. Composition is skewed to basic and acidic residues over residues 49 to 72 and 81 to 93; these read PKKEEPKSEQQKKVEDKTEEKEKE and EKEKENEDGEGQK. The chain crosses the membrane as a helical span at residues 103 to 125; the sequence is IVTSVTSTFFAGVLVASTFGYLT. One can recognise an FCP1 homology domain in the interval 191-332; it reads PGGKKYTLVI…IELLPVLESF (142 aa).

The protein belongs to the TIM50 family. Component of the mitochondrial import inner membrane translocase complex.

The protein localises to the mitochondrion inner membrane. Its function is as follows. Component of the mitochondrial import inner membrane translocase that mediates the translocation of transit peptide-containing proteins across the mitochondrial inner membrane. The polypeptide is Mitochondrial import inner membrane translocase subunit tim50 (timm50) (Dictyostelium discoideum (Social amoeba)).